We begin with the raw amino-acid sequence, 405 residues long: MFSLKALLPLALLLVSANQVAAKVHKAKIYKHELSDEMKEVTFEQHLAHLGQKYLTQFEKANPEVVFSREHPFFTEGGHDVPLTNYLNAQYYTDITLGTPPQNFKVILDTGSSNLWVPSNECGSLACFLHSKYDHEASSSYKANGTEFAIQYGTGSLEGYISQDTLSIGDLTIPKQDFAEATSEPGLTFAFGKFDGILGLGYDTISVDKVVPPFYNAIQQDLLDEKRFAFYLGDTSKDTENGGEATFGGIDESKFKGDITWLPVRRKAYWEVKFEGIGLGDEYAELESHGAAIDTGTSLITLPSGLAEMINAEIGAKKGWTGQYTLDCNTRDNLPDLIFNFNGYNFTIGPYDYTLEVSGSCISAITPMDFPEPVGPLAIVGDAFLRKYYSIYDLGNNAVGLAKAI.

An N-terminal signal peptide occupies residues Met-1–Ala-22. A propeptide spans Lys-23–Glu-76 (activation peptide). Residues Tyr-91–Ala-402 form the Peptidase A1 domain. Asp-109 is an active-site residue. Residues Cys-122 and Cys-127 are joined by a disulfide bond. Residue Asn-144 is glycosylated (N-linked (GlcNAc...) asparagine). Residue Asp-294 is part of the active site. A disulfide bridge connects residues Cys-328 and Cys-361. An N-linked (GlcNAc...) asparagine glycan is attached at Asn-345.

This sequence belongs to the peptidase A1 family.

Its subcellular location is the vacuole. It carries out the reaction Hydrolysis of proteins with broad specificity for peptide bonds. Cleaves -Leu-Leu-|-Val-Tyr- bond in a synthetic substrate. Does not act on esters of Tyr or Arg.. Its function is as follows. Aspartyl protease implicated in the post-translational regulation of S.cerevisiae vacuolar proteinases. Acts on YSCB, on YSCY and on itself. This is Saccharopepsin (PEP4) from Saccharomyces cerevisiae (strain ATCC 204508 / S288c) (Baker's yeast).